The following is a 530-amino-acid chain: UDP-glucuronosyltransferase 2B31 (530 aa).

Positions 1–24 (MSMKWISVLLGLQLSCYFSSGSCG) are cleaved as a signal peptide. Residue Lys-136 is modified to N6-succinyllysine. N-linked (GlcNAc...) asparagine glycosylation is present at Asn-316. Residues 495 to 515 (IGFLLACVATAIFVTTQCCLF) traverse the membrane as a helical segment.

This sequence belongs to the UDP-glycosyltransferase family.

The protein resides in the microsome membrane. The protein localises to the endoplasmic reticulum membrane. The catalysed reaction is glucuronate acceptor + UDP-alpha-D-glucuronate = acceptor beta-D-glucuronoside + UDP + H(+). Its function is as follows. UDPGTs are of major importance in the conjugation and subsequent elimination of potentially toxic xenobiotics and endogenous compounds. This isozyme has glucuronidating capacity on phenols, opioids, and carboxylic acid-containing drugs. The polypeptide is UDP-glucuronosyltransferase 2B31 (UGT2B31) (Canis lupus familiaris (Dog)).